We begin with the raw amino-acid sequence, 228 residues long: Uracil-DNA glycosylase (228 aa).

The active-site Proton acceptor is Asp-64.

The protein belongs to the uracil-DNA glycosylase (UDG) superfamily. UNG family.

It is found in the cytoplasm. The catalysed reaction is Hydrolyzes single-stranded DNA or mismatched double-stranded DNA and polynucleotides, releasing free uracil.. Excises uracil residues from the DNA which can arise as a result of misincorporation of dUMP residues by DNA polymerase or due to deamination of cytosine. The polypeptide is Uracil-DNA glycosylase (Pectobacterium carotovorum subsp. carotovorum (strain PC1)).